The primary structure comprises 1489 residues: Ras GTPase-activating-like protein rng2 (1489 aa).

A Calponin-homology (CH) domain is found at 41-147 (LCRVDEAKKW…YCIHALSYFL (107 aa)). IQ domains follow at residues 359 to 388 (QSSS…AYDE), 389 to 418 (LVNW…QEEA), 418 to 449 (ATKS…DLFT), 535 to 564 (ELDN…KLKA), 565 to 594 (STSS…SFQK), and 655 to 684 (FIPE…NFHK). A coiled-coil region spans residues 734 to 770 (EEEVLLEKMRKEIVQQVRDNEEIEVHINELDVKIALL). Positions 870-1110 (VLLLRFISQV…QDTMLMLERL (241 aa)) constitute a Ras-GAP domain. The stretch at 1330 to 1364 (QSLLNLREKRAFLDSQLKSYNEYIEQAMETLQSKK) forms a coiled coil.

As to quaternary structure, interacts with calmodulin cam1.

The protein localises to the cytoplasm. The protein resides in the cytoskeleton. It is found in the nucleus envelope. It localises to the microtubule organizing center. Its subcellular location is the spindle pole body. In terms of biological role, component of the contractile F-actin ring; required for its construction following assembly of F-actin at the division site. In Schizosaccharomyces pombe (strain 972 / ATCC 24843) (Fission yeast), this protein is Ras GTPase-activating-like protein rng2.